Here is a 1020-residue protein sequence, read N- to C-terminus: MSTFESLLARNEGLGQLFYQQMLEDPDAIAIVDGDYSLTYASLHAQATHLAQRLDQNDFVHEEPVGIVVQHGILDAVAQVAIIYAGGTCVTLDPALPNQQIERRLNRLRARYILVDTPNKSRGLPFSQIEVEDLPISTELIPTDSPYPVNLSLEHRSHLIHTSGTTSESKAVQIVGRSIVHVANYAPFEPVVKTDVVAHGNSTSFDVALFDIWAPLVQGASIAVLSKATLLDLSAFEAAIDRYKISVMAITAPLVNLAATTRPGMFSSMRVVLMGGEAVNIPAMRKIFEAGPPVHMVNAYGPTECCVYCLARKITLEDLDTGAVSIGKAIGNNIATVCDEMGKPVPDGEEGELLVGGPGVSPGYVNLPGKNAASFIEVPDLVDANGTPYHMYRTGDLVKRRPDGQYDFVGRFDHQVKIRGYRVELGAIETVLMDTGYFSEGVVMKVDSKAEGAGSALVAFAVLAPTAPPSAVTDATAALTAALPHYMIPNIHIVESIPLTNHAKVDRKQLADWCLQRQEKNMCAMQDKVPSEGASTRDQLGALWATILATPVREYSDNDDFFGLGGTSLQASLLISLIRRTFNTEVSLLALYDNSTLGQLAHIVDRNQGGALATVQNLREMWIADTMIGDALETPVGPVVDWRRDTEGRVFLTGATGFVGAFLLSDMLKMPGIHQVGCLVRAPDEATGVRRLRHALEKYNLWREEYLPKLLPLCGKLEDPWLGLGEQRFREIADWASVIFHLGALVNYTQPYSWHRPANIEGTVNVVRLACTGRSKALHYCSSISCFGPTGIINGTKVVHEDGALMPHLNALPYDHGYAQSQWVAEELLRRLIHRRFPIAVYRPGFITGHSETGACNPDDFFSRLIRACSSIGCYPGLPNQRKEFVPIDYVTSTMIHIASSSLSLGHAFHIVPPTREESPEMNDTMSLIGELTGTSIQPVSYREWIEQLSSTKDLSLQPLLPMLAEVVIDGMTRWEMYENMPTYENTNTLRALASCPDLPKFPMVDEALLRKYLDYLADH.

Positions 21–419 (QMLEDPDAIA…GRFDHQVKIR (399 aa)) are adenylation (A) domain. The region spanning 526 to 608 (QDKVPSEGAS…QLAHIVDRNQ (83 aa)) is the Carrier domain. Ser-568 is subject to O-(pantetheine 4'-phosphoryl)serine. The tract at residues 652–894 (LTGATGFVGA…FVPIDYVTST (243 aa)) is short-chain dehydrogenase/reductase (R) domain.

It belongs to the NRP synthetase family.

It functions in the pathway secondary metabolite biosynthesis. Non-canonical nonribosomal peptide synthetase; part of the gene cluster that mediates the biosynthesis of hancockiamides, an unusual new family of N-cinnamoylated piperazines. The NRPS hkm10 and the NmrA-like reductase hkm9 are proposed to convert two molecules of L-Phe to the intermediary piperazine called xenocockiamide A. Xenocockiamide A is then converted to hancockiamide D via a series of hydroxylations and O-methylations. The tyrosinase hkm6 may catalyze an aromatic hydroxylation, then the 2-oxoglutarate-dependent Fe(II) dioxygenase hkm4 and the FAD-dependent phenol hydroxylase hkm7 may catalyze consecutive hydroxylations to install 2 more hydroxy groups, and the methyltransferase hkm8 probably catalyzes two methylations using 2 molecules of S-adenosyl-L-methionine (SAM). The NRPS hkm11 activates and transfers trans-cinnamate supplied by the PAL hkm12 to hancockiamide D and produces hancockiamide A. NRPS Hkm11 has the flexibility to tolerate the bulky hancockiamide G as a substrate and the absence of the acetyl-transferase hkm3 opens up the opportunity for hkm11 to introduce a second N-cinnamoyl moiety. The cytochrome P450 monooxygenase hkm5 catalyzes the methylenedioxy bridge formation, converting hancockiamide A into hancockiamide G. Hkm5 can also convert hancockiamide B into hancockiamide C, and hancockiamide D into hancockiamide H. The N-acetyltransferase hkm3 finally transfers an acetyl group to 1-N of piperazine, converting hancockiamide A into hancockiamide B and hancockiamide G into hancockiamide C. This chain is Non-canonical nonribosomal peptide synthetase hkm10, found in Aspergillus hancockii.